A 1117-amino-acid chain; its full sequence is Protein cup (1117 aa).

Residues Met-1 to Ser-106 are disordered. Composition is skewed to pro residues over residues Tyr-54–Val-64 and Cys-95–Pro-104. Phosphoserine is present on residues Ser-263 and Ser-270. Positions Ser-270–Ser-326 are disordered. Positions Glu-283–Pro-294 are enriched in polar residues. The short motif at Tyr-327–Met-333 is the YXXXXLphi motif 1 element. 2 positions are modified to phosphoserine: Ser-347 and Ser-350. The YXXXXLphi motif 2 signature appears at Glu-363–Arg-369. 6 disordered regions span residues Ile-493–Ser-528, Lys-596–His-618, Thr-654–Phe-673, Ser-679–Ser-728, Gly-984–Pro-1004, and Ile-1016–Phe-1051. Thr-503 is modified (phosphothreonine). Phosphoserine occurs at positions 509, 513, 520, 523, and 524. Composition is skewed to low complexity over residues Ser-679 to Asn-712 and Gln-988 to Gln-1001.

This sequence belongs to the 4E-T/EIF4E-T family. As to quaternary structure, component of the osk RNP complex, which is composed of at least exu, yps, aret/bruno, cup, and the mRNA of osk. Interacts with the decapping activators me31B and tral. Component of the nanos RNP complex, which is composed of at least smg, cup, tral, me31B, the CCR4-NOT complex members Rga/NOT2 and Caf1, and the mRNA of nanos (nos). Interacts with btz. Recruited to the 3'-UTR of nos and osk mRNAs by smg and btz, respectively. Forms a ribonucleoprotein complex (RNP) containing at least me31B, eIF4E1, cup, tral and pAbp; this interaction is required for the translational silencing of maternal mRNAs during the maternal-to-zygotic transition. No interaction was detected with pAbp in 1-5 hour embryos. Interacts with osk and vas. Interacts with Pop2, twin/CCR4, Rga, Not3 and Not1 which are all core components of the CCR4-NOT deadenylase complex; interaction with the complex is required for cup deadenylation activity. Interacts with nanos. Interacts with smg. Interacts (via YXXXXLphi motifs) with eIF4E1; the interaction promotes retention of cup in the cytoplasm. Interacts with orb; the interaction represses the orb positive autoregulatory loop. Interacts with Nup154. Predominantly expressed in ovaries and in 0-2 hours old embryos. Weakly expressed in testis. Expressed in young embryos through stage 9, then it decreases throughout the rest of embryogenesis. In ovaries, it is expressed in germ cells throughout pre-vitellogenic development, but is not expressed in the somatic follicle cells. In germarial cysts, the protein (and not the transcripts) is transported selectively into the oocyte.

It is found in the cytoplasm. The protein localises to the nucleus. It localises to the cytoplasmic ribonucleoprotein granule. Adapter protein that plays a central role in localization of transcripts in the oocyte and in young embryos. Maintains RNA targets in a repressed state by promoting their deadenylation and protects deadenylated mRNAs from further degradation. Binds to and recruits eIF-4E to the 3'-UTR of some mRNA targets which prevents interaction between eIF4E1 and eIF4G. This may contribute to translational repression but does not appear to be necessary for it to occur. Can promote translational repression independently of deadenylation and eIF4E1 binding. Required for correct localization of eIF4E1 in the developing oocyte. Required for translational repression of oskar (osk) mRNA. Also required for the translational repression of nanos (nos) mRNA. Promotes the accumulation of the germ plasm components osk, vas and stau at the posterior pole of the oocyte and is required for germ cell development. Represses orb positive autoregulatory activity which prevents premature activation of orb and ensures its accumulation specifically in the developing oocyte. In 0-1 hour embryos, forms a complex with me31B, cup, tral and pAbp which binds to various mRNAs including maternal mRNAs, and down-regulates their expression during the maternal-to-zygotic transition. The protein is Protein cup (cup) of Drosophila melanogaster (Fruit fly).